The primary structure comprises 660 residues: Acetyl-coenzyme A synthetase (660 aa).

CoA-binding positions include 197–200 and Thr317; that span reads RGGK. ATP is bound by residues 397-399, 421-426, Asp512, and Arg528; these read GEP and DTWWQT. Ser536 provides a ligand contact to CoA. Residue Arg539 participates in ATP binding. Mg(2+)-binding residues include Val550, His552, and Val555. The residue at position 625 (Lys625) is an N6-acetyllysine.

Belongs to the ATP-dependent AMP-binding enzyme family. Mg(2+) is required as a cofactor. In terms of processing, acetylated. Deacetylation by the SIR2-homolog deacetylase activates the enzyme.

The enzyme catalyses acetate + ATP + CoA = acetyl-CoA + AMP + diphosphate. Functionally, catalyzes the conversion of acetate into acetyl-CoA (AcCoA), an essential intermediate at the junction of anabolic and catabolic pathways. AcsA undergoes a two-step reaction. In the first half reaction, AcsA combines acetate with ATP to form acetyl-adenylate (AcAMP) intermediate. In the second half reaction, it can then transfer the acetyl group from AcAMP to the sulfhydryl group of CoA, forming the product AcCoA. This is Acetyl-coenzyme A synthetase from Burkholderia thailandensis (strain ATCC 700388 / DSM 13276 / CCUG 48851 / CIP 106301 / E264).